A 230-amino-acid chain; its full sequence is Ureidoacrylate amidohydrolase RutB (230 aa).

Asp24 serves as the catalytic Proton acceptor. Lys133 is an active-site residue. Cys166 (nucleophile) is an active-site residue.

It belongs to the isochorismatase family. RutB subfamily.

It catalyses the reaction (Z)-3-ureidoacrylate + H2O + H(+) = (Z)-3-aminoacrylate + NH4(+) + CO2. It carries out the reaction (Z)-3-ureidoacrylate + H2O = (Z)-3-aminoacrylate + carbamate + H(+). The enzyme catalyses (Z)-2-methylureidoacrylate + H2O + H(+) = (Z)-2-methylaminoacrylate + NH4(+) + CO2. Its function is as follows. Hydrolyzes ureidoacrylate to form aminoacrylate and carbamate. The carbamate hydrolyzes spontaneously, thereby releasing one of the nitrogen atoms of the pyrimidine ring as ammonia and one of its carbon atoms as CO2. The chain is Ureidoacrylate amidohydrolase RutB from Escherichia coli O44:H18 (strain 042 / EAEC).